A 92-amino-acid chain; its full sequence is Large ribosomal subunit protein eL31 (92 aa).

The protein belongs to the eukaryotic ribosomal protein eL31 family.

The sequence is that of Large ribosomal subunit protein eL31 from Halorubrum lacusprofundi (strain ATCC 49239 / DSM 5036 / JCM 8891 / ACAM 34).